Consider the following 193-residue polypeptide: D-alanyl-D-alanine dipeptidase (193 aa).

Zn(2+)-binding residues include H98 and D105. The Proton donor/acceptor role is filled by E162. H165 is a Zn(2+) binding site.

This sequence belongs to the peptidase M15D family. Zn(2+) is required as a cofactor.

The protein localises to the cytoplasm. It catalyses the reaction D-alanyl-D-alanine + H2O = 2 D-alanine. Catalyzes hydrolysis of the D-alanyl-D-alanine dipeptide. May have a role in cell-wall turnover. The sequence is that of D-alanyl-D-alanine dipeptidase from Escherichia coli (strain K12).